Consider the following 509-residue polypeptide: Maturase K (509 aa).

It belongs to the intron maturase 2 family. MatK subfamily.

The protein localises to the plastid. The protein resides in the chloroplast. Usually encoded in the trnK tRNA gene intron. Probably assists in splicing its own and other chloroplast group II introns. This Arpophyllum giganteum (Hyacinth orchid) protein is Maturase K.